The sequence spans 330 residues: Malate dehydrogenase (330 aa).

Residue 12 to 18 coordinates NAD(+); that stretch reads GAAGQIG. Residues Arg93 and Arg99 each coordinate substrate. Residues Asn106, Gln113, and 130–132 each bind NAD(+); that span reads VGN. Substrate contacts are provided by Asn132 and Arg163. His188 functions as the Proton acceptor in the catalytic mechanism.

This sequence belongs to the LDH/MDH superfamily. MDH type 2 family.

It carries out the reaction (S)-malate + NAD(+) = oxaloacetate + NADH + H(+). Catalyzes the reversible oxidation of malate to oxaloacetate. This is Malate dehydrogenase from Legionella pneumophila subsp. pneumophila (strain Philadelphia 1 / ATCC 33152 / DSM 7513).